We begin with the raw amino-acid sequence, 190 residues long: GTP cyclohydrolase 1 (190 aa).

Cys75, His78, and Cys146 together coordinate Zn(2+).

This sequence belongs to the GTP cyclohydrolase I family. As to quaternary structure, toroid-shaped homodecamer, composed of two pentamers of five dimers.

The enzyme catalyses GTP + H2O = 7,8-dihydroneopterin 3'-triphosphate + formate + H(+). It participates in cofactor biosynthesis; 7,8-dihydroneopterin triphosphate biosynthesis; 7,8-dihydroneopterin triphosphate from GTP: step 1/1. This chain is GTP cyclohydrolase 1, found in Campylobacter jejuni subsp. jejuni serotype O:23/36 (strain 81-176).